A 270-amino-acid chain; its full sequence is NAD kinase (270 aa).

Residue D49 is the Proton acceptor of the active site. NAD(+) is bound by residues 49–50 (DG), R54, 126–127 (NE), R152, D154, 165–170 (TAYNKS), A189, and Q227.

This sequence belongs to the NAD kinase family. Requires a divalent metal cation as cofactor.

It is found in the cytoplasm. It catalyses the reaction NAD(+) + ATP = ADP + NADP(+) + H(+). Functionally, involved in the regulation of the intracellular balance of NAD and NADP, and is a key enzyme in the biosynthesis of NADP. Catalyzes specifically the phosphorylation on 2'-hydroxyl of the adenosine moiety of NAD to yield NADP. The sequence is that of NAD kinase from Lactococcus lactis subsp. lactis (strain IL1403) (Streptococcus lactis).